A 255-amino-acid polypeptide reads, in one-letter code: Segregation and condensation protein A (255 aa).

The protein belongs to the ScpA family. Component of a cohesin-like complex composed of ScpA, ScpB and the Smc homodimer, in which ScpA and ScpB bind to the head domain of Smc. The presence of the three proteins is required for the association of the complex with DNA.

It is found in the cytoplasm. Participates in chromosomal partition during cell division. May act via the formation of a condensin-like complex containing Smc and ScpB that pull DNA away from mid-cell into both cell halves. This is Segregation and condensation protein A from Lactiplantibacillus plantarum (strain ATCC BAA-793 / NCIMB 8826 / WCFS1) (Lactobacillus plantarum).